Here is a 713-residue protein sequence, read N- to C-terminus: Polyribonucleotide nucleotidyltransferase (713 aa).

D487 and D493 together coordinate Mg(2+). One can recognise a KH domain in the interval 554–613 (PRIEVMNIPVDKIREVIGSGGKVIREIVEKTGAKINIEDDGTVKIASASGKEIEAARKWI). Positions 623-691 (GQIYEGTVVK…ERGKVRLSMK (69 aa)) constitute an S1 motif domain.

Belongs to the polyribonucleotide nucleotidyltransferase family. Requires Mg(2+) as cofactor.

The protein localises to the cytoplasm. It carries out the reaction RNA(n+1) + phosphate = RNA(n) + a ribonucleoside 5'-diphosphate. Involved in mRNA degradation. Catalyzes the phosphorolysis of single-stranded polyribonucleotides processively in the 3'- to 5'-direction. This chain is Polyribonucleotide nucleotidyltransferase, found in Agrobacterium fabrum (strain C58 / ATCC 33970) (Agrobacterium tumefaciens (strain C58)).